Here is a 342-residue protein sequence, read N- to C-terminus: Protein RecA (342 aa).

65 to 72 lines the ATP pocket; that stretch reads GPESSGKT.

It belongs to the RecA family.

It localises to the cytoplasm. Can catalyze the hydrolysis of ATP in the presence of single-stranded DNA, the ATP-dependent uptake of single-stranded DNA by duplex DNA, and the ATP-dependent hybridization of homologous single-stranded DNAs. It interacts with LexA causing its activation and leading to its autocatalytic cleavage. The polypeptide is Protein RecA (Teredinibacter turnerae (strain ATCC 39867 / T7901)).